We begin with the raw amino-acid sequence, 118 residues long: uncharacterized protein (118 aa).

The segment at 49 to 80 (SKEEHTTSAANLHPRKKKRMPPRRAEKNKAPN) is disordered. Residues 61 to 70 (HPRKKKRMPP) are compositionally biased toward basic residues.

This is an uncharacterized protein from Saccharomyces cerevisiae (strain ATCC 204508 / S288c) (Baker's yeast).